The following is a 751-amino-acid chain: Putative tyrosine-protein kinase EpsB (751 aa).

Residues 1–31 lie on the Cytoplasmic side of the membrane; it reads MTQNLSQPPAVNAPESELDLVRYLDVLVANR. The chain crosses the membrane as a helical span at residues 32–52; the sequence is WLIAGIAAVVMLLGATYAFLA. Residues 53–444 lie on the Periplasmic side of the membrane; the sequence is RPVYEADVLV…VPEEPVKPKK (392 aa). The helical transmembrane segment at 445–465 threads the bilayer; the sequence is LTVTALAGVLGVVLGVVAAFV. The Cytoplasmic portion of the chain corresponds to 466–751; that stretch reads RNTLFGGITE…PSAEAEAESA (286 aa).

Belongs to the etk/wzc family.

It is found in the cell inner membrane. The enzyme catalyses L-tyrosyl-[protein] + ATP = O-phospho-L-tyrosyl-[protein] + ADP + H(+). Functionally, probably involved in polymerization and/or export of exopolysaccharide EPS I which functions as a virulence factor. May be involved in an ATP-dependent process in the pathway for EPS I production, possibly export of the trimeric repeat units across the inner membrane or their polymerization. The protein is Putative tyrosine-protein kinase EpsB (epsB) of Ralstonia nicotianae (strain ATCC BAA-1114 / GMI1000) (Ralstonia solanacearum).